The primary structure comprises 148 residues: Glutamyl-tRNA(Gln) amidotransferase subunit C, mitochondrial (148 aa).

Belongs to the GatC family. As to quaternary structure, subunit of the heterotrimeric GatCAB amidotransferase (AdT) complex, composed of A, B and C subunits.

It localises to the mitochondrion. It carries out the reaction L-glutamyl-tRNA(Gln) + L-glutamine + ATP + H2O = L-glutaminyl-tRNA(Gln) + L-glutamate + ADP + phosphate + H(+). In terms of biological role, allows the formation of correctly charged Gln-tRNA(Gln) through the transamidation of misacylated Glu-tRNA(Gln) in the mitochondria. The reaction takes place in the presence of glutamine and ATP through an activated gamma-phospho-Glu-tRNA(Gln). This chain is Glutamyl-tRNA(Gln) amidotransferase subunit C, mitochondrial, found in Drosophila yakuba (Fruit fly).